A 199-amino-acid polypeptide reads, in one-letter code: Transcription factor 15 (199 aa).

The segment at 25–67 is disordered; sequence EENRSESDASDQSFGCCEGPEAARRGPGPGGGRRAGGGGGAGP. Positions 51–66 are enriched in gly residues; the sequence is PGPGGGRRAGGGGGAG. Residues 72–124 enclose the bHLH domain; the sequence is RQRQAANARERDRTQSVNTAFTALRTLIPTEPVDRKLSKIETVRLASSYIAHL.

In terms of assembly, heterodimer; efficient DNA binding requires dimerization with another bHLH protein, such as TCF3/E12. Interacts with MEOX2.

Its subcellular location is the nucleus. Functionally, early transcription factor that plays a key role in somitogenesis, paraxial mesoderm development and regulation of stem cell pluripotency. Essential for the mesenchymal to epithelial transition associated with somite formation. Required for somite morphogenesis, thereby regulating patterning of the axial skeleton and skeletal muscles. Required for proper localization of somite epithelium markers during the mesenchymal to epithelial transition. Also plays a key role in regulation of stem cell pluripotency. Promotes pluripotency exit of embryonic stem cells (ESCs) by priming ESCs for differentiation. Acts as a key regulator of self-renewal of hematopoietic stem cells (HSCs) by mediating HSCs quiescence and long-term self-renewal. Together with MEOX2, regulates transcription in heart endothelial cells to regulate fatty acid transport across heart endothelial cells. Acts by forming a heterodimer with another helix-loop-helix (bHLH) protein, such as TCF3/E12, that binds DNA on E-box motifs (5'-CANNTG-3') and activates transcription of target genes. The sequence is that of Transcription factor 15 from Homo sapiens (Human).